We begin with the raw amino-acid sequence, 266 residues long: Glucosamine-6-phosphate deaminase (266 aa).

Asp72 (proton acceptor; for enolization step) is an active-site residue. The For ring-opening step role is filled by Asp141. His143 (proton acceptor; for ring-opening step) is an active-site residue. Catalysis depends on Glu148, which acts as the For ring-opening step.

The protein belongs to the glucosamine/galactosamine-6-phosphate isomerase family. NagB subfamily. In terms of assembly, homohexamer.

The enzyme catalyses alpha-D-glucosamine 6-phosphate + H2O = beta-D-fructose 6-phosphate + NH4(+). Its pathway is amino-sugar metabolism; N-acetylneuraminate degradation; D-fructose 6-phosphate from N-acetylneuraminate: step 5/5. With respect to regulation, allosterically activated by N-acetylglucosamine 6-phosphate (GlcNAc6P). Its function is as follows. Catalyzes the reversible isomerization-deamination of glucosamine 6-phosphate (GlcN6P) to form fructose 6-phosphate (Fru6P) and ammonium ion. In Serratia proteamaculans (strain 568), this protein is Glucosamine-6-phosphate deaminase.